Consider the following 122-residue polypeptide: Large ribosomal subunit protein uL14 (122 aa).

This sequence belongs to the universal ribosomal protein uL14 family. Part of the 50S ribosomal subunit. Forms a cluster with proteins L3 and L19. In the 70S ribosome, L14 and L19 interact and together make contacts with the 16S rRNA in bridges B5 and B8.

In terms of biological role, binds to 23S rRNA. Forms part of two intersubunit bridges in the 70S ribosome. This is Large ribosomal subunit protein uL14 from Sulfurovum sp. (strain NBC37-1).